The following is a 98-amino-acid chain: Integration host factor subunit alpha (98 aa).

Residues 52–71 (FDLRDKNQRPGRNPKTGEDI) form a disordered region.

The protein belongs to the bacterial histone-like protein family. In terms of assembly, heterodimer of an alpha and a beta chain.

In terms of biological role, this protein is one of the two subunits of integration host factor, a specific DNA-binding protein that functions in genetic recombination as well as in transcriptional and translational control. In Photorhabdus laumondii subsp. laumondii (strain DSM 15139 / CIP 105565 / TT01) (Photorhabdus luminescens subsp. laumondii), this protein is Integration host factor subunit alpha.